Reading from the N-terminus, the 188-residue chain is PRA1 family protein 3 (188 aa).

An N-acetylmethionine modification is found at Met1. Over 1–35 (MDVNIAPLRAWDDFFPGSDRFARPDFRDISKWNNR) the chain is Cytoplasmic. 2 helical membrane passes run 36–56 (VVSN…MMIS) and 57–77 (IVGF…VLVF). Over 78–93 (TGFVWAAHNKDVLRRM) the chain is Cytoplasmic. Transmembrane regions (helical) follow at residues 94–114 (KKRY…FLIS) and 115–135 (MFGG…LMFI). The required for homodimer formation and heterodimer formation with ARL6IP1 stretch occupies residues 103–117 (MVVMLASYFLISMFG). The Cytoplasmic segment spans residues 136 to 188 (HASLRLRNLKNKLENKMEGIGLKRTPMGIVLDALEQQEEGINRLTDYISKVKE). Residues 136-188 (HASLRLRNLKNKLENKMEGIGLKRTPMGIVLDALEQQEEGINRLTDYISKVKE) form a targeting to endoplasmic reticulum membrane region.

It belongs to the PRA1 family. As to quaternary structure, homodimer. Heterodimer with ARL6IP1. Forms multimers. Interacts with ARL6. Interacts with prenylated RAB1A and RAB3A. Interacts with SLC1A1/EAAC1. Interacts with RTN2 (via first transmembrane domain). Does not interact with VAMP1, VAMP2 or VAMP3.

It localises to the endoplasmic reticulum membrane. The protein localises to the cell membrane. The protein resides in the cytoplasm. Its subcellular location is the cytoskeleton. Regulates intracellular concentrations of taurine and glutamate. Negatively modulates SLC1A1/EAAC1 glutamate transport activity by decreasing its affinity for glutamate in a PKC activity-dependent manner. Plays a role in the retention of SLC1A1/EAAC1 in the endoplasmic reticulum. This chain is PRA1 family protein 3 (ARL6IP5), found in Homo sapiens (Human).